We begin with the raw amino-acid sequence, 122 residues long: Large ribosomal subunit protein uL14 (122 aa).

The protein belongs to the universal ribosomal protein uL14 family. In terms of assembly, part of the 50S ribosomal subunit. Forms a cluster with proteins L3 and L19. In the 70S ribosome, L14 and L19 interact and together make contacts with the 16S rRNA in bridges B5 and B8.

Functionally, binds to 23S rRNA. Forms part of two intersubunit bridges in the 70S ribosome. The polypeptide is Large ribosomal subunit protein uL14 (Thermosynechococcus vestitus (strain NIES-2133 / IAM M-273 / BP-1)).